The sequence spans 1127 residues: Testis-expressed protein 2 (1127 aa).

2 disordered regions span residues 1–27 and 133–279; these read MTSL…HVQR and AVSP…SFFK. A compositionally biased stretch (low complexity) spans 133–187; that stretch reads AVSPGSSSSGPLASSPSVSSLSEQKTSSSSPLSSPSKSPILSSSASTSTLSSAKP. Phosphoserine is present on serine 196. Positions 249–275 are enriched in polar residues; it reads QFTQPRNTGGDSKTAPSSPLTSPSDTR. Threonine 262 is subject to Phosphothreonine. Phosphoserine is present on residues serine 265, serine 266, serine 270, and serine 295. Asparagine 330 carries N-linked (GlcNAc...) asparagine glycosylation. The segment at 348–386 is disordered; that stretch reads EEECDSEGDGYGSDSNIPRSDHPKSTGEPTREIELKSSQ. A compositionally biased stretch (basic and acidic residues) spans 366 to 382; sequence RSDHPKSTGEPTREIEL. The next 2 helical transmembrane spans lie at 475-495 and 497-517; these read TLGF…PHYV and GLFL…WFFT. Disordered regions lie at residues 648 to 685, 715 to 764, 786 to 816, and 947 to 980; these read KAQT…QRDQ, KKSS…QKEL, QESR…PPSE, and DEES…GYVG. Over residues 650–670 the composition is skewed to basic and acidic residues; sequence QTDKETSEEKPPAEGSEDPKK. Serine 732, serine 738, serine 744, serine 748, serine 751, serine 798, and serine 815 each carry phosphoserine. Polar residues predominate over residues 735–750; that stretch reads NSPSGHLTHSRSSSKG. Polar residues predominate over residues 787 to 804; the sequence is ESRSPQRSPLQSAESSPT. The SMP-LTD domain occupies 816–1101; it reads EEEEQEAWVN…MPNMDDVYIT (286 aa). Over residues 947 to 962 the composition is skewed to acidic residues; sequence DEESSSAGSSEEDDAP.

The protein resides in the endoplasmic reticulum membrane. Its subcellular location is the nucleus membrane. In terms of biological role, during endoplasmic reticulum (ER) stress or when cellular ceramide levels increase, may induce contacts between the ER and medial-Golgi complex to facilitate non-vesicular transport of ceramides from the ER to the Golgi complex where they are converted to complex sphingolipids, preventing toxic ceramide accumulation. This is Testis-expressed protein 2 (TEX2) from Homo sapiens (Human).